The chain runs to 238 residues: Uroporphyrinogen-III C-methyltransferase (238 aa).

Residues Pro11, 87 to 89 (GGD), 117 to 118 (TS), and Met170 each bind S-adenosyl-L-homocysteine.

Belongs to the precorrin methyltransferase family. As to quaternary structure, monomer.

It catalyses the reaction uroporphyrinogen III + 2 S-adenosyl-L-methionine = precorrin-2 + 2 S-adenosyl-L-homocysteine + H(+). Its pathway is cofactor biosynthesis; adenosylcobalamin biosynthesis; precorrin-2 from uroporphyrinogen III: step 1/1. The protein operates within porphyrin-containing compound metabolism; siroheme biosynthesis; precorrin-2 from uroporphyrinogen III: step 1/1. Its activity is regulated as follows. SUMT exhibits a substrate inhibition phenomenon at uroporphyrinogen III concentrations above 0.5 uM; this property might play a regulatory role in cobalamin biosynthesis. Catalyzes the two successive C-2 and C-7 methylation reactions involved in the conversion of uroporphyrinogen III to precorrin-2 via the intermediate formation of precorrin-1. It is a step in the biosynthesis of both cobalamin (vitamin B12) and siroheme. The protein is Uroporphyrinogen-III C-methyltransferase of Priestia megaterium (Bacillus megaterium).